We begin with the raw amino-acid sequence, 545 residues long: Probable bifunctional tRNA threonylcarbamoyladenosine biosynthesis protein (545 aa).

A kae1 region spans residues 1–329 (MKNTFILGIE…YRTDDVKVTW (329 aa)). 3 residues coordinate Fe cation: histidine 113, histidine 117, and tyrosine 134. Residues 134-138 (YVSGA), aspartate 166, glycine 179, glutamate 183, and asparagine 262 contribute to the L-threonylcarbamoyladenylate site. Residue aspartate 290 coordinates Fe cation. Residues 340 to 545 (EISPGTSLKL…EEIKKRARYA (206 aa)) form the Protein kinase domain. ATP is bound by residues 353 to 361 (LDNGAEAIV) and lysine 375. The Proton acceptor; for kinase activity role is filled by aspartate 462.

The protein in the N-terminal section; belongs to the KAE1 / TsaD family. It in the C-terminal section; belongs to the protein kinase superfamily. Tyr protein kinase family. BUD32 subfamily. In terms of assembly, component of the KEOPS complex that consists of Kae1, Bud32, Cgi121 and Pcc1; the whole complex dimerizes. Fe(2+) serves as cofactor.

Its subcellular location is the cytoplasm. The catalysed reaction is L-seryl-[protein] + ATP = O-phospho-L-seryl-[protein] + ADP + H(+). It catalyses the reaction L-threonyl-[protein] + ATP = O-phospho-L-threonyl-[protein] + ADP + H(+). The enzyme catalyses L-threonylcarbamoyladenylate + adenosine(37) in tRNA = N(6)-L-threonylcarbamoyladenosine(37) in tRNA + AMP + H(+). Required for the formation of a threonylcarbamoyl group on adenosine at position 37 (t(6)A37) in tRNAs that read codons beginning with adenine. Is a component of the KEOPS complex that is probably involved in the transfer of the threonylcarbamoyl moiety of threonylcarbamoyl-AMP (TC-AMP) to the N6 group of A37. The Kae1 domain likely plays a direct catalytic role in this reaction. The Bud32 domain probably displays kinase activity that regulates Kae1 function. This is Probable bifunctional tRNA threonylcarbamoyladenosine biosynthesis protein from Methanosarcina barkeri (strain Fusaro / DSM 804).